An 812-amino-acid polypeptide reads, in one-letter code: ATP-dependent zinc metalloprotease FtsH (812 aa).

The Cytoplasmic portion of the chain corresponds to 1-21 (MPPSPPRPPKFPGSGRPESPN). A helical transmembrane segment spans residues 22 to 42 (WGVWVMVLLIVGVLAFGFFTP). The Extracellular segment spans residues 43–241 (ESFGLGPRKE…TKFKRESGSW (199 aa)). The helical transmembrane segment at 242-262 (GGILLNLLPIVLILVILFFMF) threads the bilayer. Residues 263–812 (RAQSGGARGA…EFGKDGGEKK (550 aa)) lie on the Cytoplasmic side of the membrane. Residue 333-340 (GAPGTGKT) participates in ATP binding. A Zn(2+)-binding site is contributed by His555. The active site involves Glu556. Zn(2+) contacts are provided by His559 and Asp631. A disordered region spans residues 739-812 (KNPPARVTPP…EFGKDGGEKK (74 aa)). 2 stretches are compositionally biased toward basic and acidic residues: residues 757 to 785 (QPGK…RKME) and 803 to 812 (EFGKDGGEKK).

In the central section; belongs to the AAA ATPase family. It in the C-terminal section; belongs to the peptidase M41 family. In terms of assembly, homohexamer. It depends on Zn(2+) as a cofactor.

It is found in the cell membrane. Functionally, acts as a processive, ATP-dependent zinc metallopeptidase for both cytoplasmic and membrane proteins. Plays a role in the quality control of integral membrane proteins. The polypeptide is ATP-dependent zinc metalloprotease FtsH (Akkermansia muciniphila (strain ATCC BAA-835 / DSM 22959 / JCM 33894 / BCRC 81048 / CCUG 64013 / CIP 107961 / Muc)).